Here is a 75-residue protein sequence, read N- to C-terminus: UPF0346 protein LGAS_0911 (75 aa).

Belongs to the UPF0346 family.

The protein is UPF0346 protein LGAS_0911 of Lactobacillus gasseri (strain ATCC 33323 / DSM 20243 / BCRC 14619 / CIP 102991 / JCM 1131 / KCTC 3163 / NCIMB 11718 / NCTC 13722 / AM63).